The chain runs to 200 residues: 3-isopropylmalate dehydratase small subunit (200 aa).

This sequence belongs to the LeuD family. LeuD type 1 subfamily. Heterodimer of LeuC and LeuD.

It catalyses the reaction (2R,3S)-3-isopropylmalate = (2S)-2-isopropylmalate. It participates in amino-acid biosynthesis; L-leucine biosynthesis; L-leucine from 3-methyl-2-oxobutanoate: step 2/4. In terms of biological role, catalyzes the isomerization between 2-isopropylmalate and 3-isopropylmalate, via the formation of 2-isopropylmaleate. The protein is 3-isopropylmalate dehydratase small subunit of Histophilus somni (strain 129Pt) (Haemophilus somnus).